The following is a 101-amino-acid chain: NADH-quinone oxidoreductase subunit K (101 aa).

The next 3 helical transmembrane spans lie at 5 to 25 (LGQV…GVLL), 29 to 49 (LIMI…VLVG), and 62 to 82 (VALL…ALVV).

Belongs to the complex I subunit 4L family. NDH-1 is composed of 14 different subunits. Subunits NuoA, H, J, K, L, M, N constitute the membrane sector of the complex.

Its subcellular location is the cell inner membrane. It catalyses the reaction a quinone + NADH + 5 H(+)(in) = a quinol + NAD(+) + 4 H(+)(out). Functionally, NDH-1 shuttles electrons from NADH, via FMN and iron-sulfur (Fe-S) centers, to quinones in the respiratory chain. The immediate electron acceptor for the enzyme in this species is believed to be ubiquinone. Couples the redox reaction to proton translocation (for every two electrons transferred, four hydrogen ions are translocated across the cytoplasmic membrane), and thus conserves the redox energy in a proton gradient. In Syntrophotalea carbinolica (strain DSM 2380 / NBRC 103641 / GraBd1) (Pelobacter carbinolicus), this protein is NADH-quinone oxidoreductase subunit K.